The following is a 380-amino-acid chain: Cytochrome b (380 aa).

The next 4 membrane-spanning stretches (helical) occupy residues 33 to 53 (FGSL…FLAM), 77 to 98 (WLIR…FLHV), 113 to 133 (WNMG…GYVL), and 178 to 198 (FFAF…VHLL). The heme b site is built by H83 and H97. Heme b-binding residues include H182 and H196. Position 201 (H201) interacts with a ubiquinone. Transmembrane regions (helical) follow at residues 226-246 (IKDL…VLFF), 288-308 (LGGV…PLLH), 320-340 (ITQT…WIGG), and 347-367 (FIMI…IFMP).

It belongs to the cytochrome b family. As to quaternary structure, the cytochrome bc1 complex contains 11 subunits: 3 respiratory subunits (MT-CYB, CYC1 and UQCRFS1), 2 core proteins (UQCRC1 and UQCRC2) and 6 low-molecular weight proteins (UQCRH/QCR6, UQCRB/QCR7, UQCRQ/QCR8, UQCR10/QCR9, UQCR11/QCR10 and a cleavage product of UQCRFS1). This cytochrome bc1 complex then forms a dimer. It depends on heme b as a cofactor.

It is found in the mitochondrion inner membrane. Component of the ubiquinol-cytochrome c reductase complex (complex III or cytochrome b-c1 complex) that is part of the mitochondrial respiratory chain. The b-c1 complex mediates electron transfer from ubiquinol to cytochrome c. Contributes to the generation of a proton gradient across the mitochondrial membrane that is then used for ATP synthesis. The chain is Cytochrome b (MT-CYB) from Synaptomys borealis (Northern bog lemming).